Consider the following 328-residue polypeptide: Galactinol synthase 10 (328 aa).

The active site involves K106. 3 residues coordinate Mn(2+): D122, D124, and H248.

The protein belongs to the glycosyltransferase 8 family. Galactosyltransferase subfamily. A divalent metal cation serves as cofactor.

The protein resides in the cytoplasm. It catalyses the reaction myo-inositol + UDP-alpha-D-galactose = alpha-D-galactosyl-(1-&gt;3)-1D-myo-inositol + UDP + H(+). Functionally, galactinol synthase involved in the biosynthesis of raffinose family oligosaccharides (RFOs) that function as osmoprotectants. May promote plant stress tolerance. The protein is Galactinol synthase 10 (GOLS10) of Arabidopsis thaliana (Mouse-ear cress).